We begin with the raw amino-acid sequence, 272 residues long: Ribosomal RNA small subunit methyltransferase A (272 aa).

Positions 13, 15, 40, 61, 85, and 105 each coordinate S-adenosyl-L-methionine.

It belongs to the class I-like SAM-binding methyltransferase superfamily. rRNA adenine N(6)-methyltransferase family. RsmA subfamily.

Its subcellular location is the cytoplasm. It catalyses the reaction adenosine(1518)/adenosine(1519) in 16S rRNA + 4 S-adenosyl-L-methionine = N(6)-dimethyladenosine(1518)/N(6)-dimethyladenosine(1519) in 16S rRNA + 4 S-adenosyl-L-homocysteine + 4 H(+). In terms of biological role, specifically dimethylates two adjacent adenosines (A1518 and A1519) in the loop of a conserved hairpin near the 3'-end of 16S rRNA in the 30S particle. May play a critical role in biogenesis of 30S subunits. In Bacteroides fragilis (strain ATCC 25285 / DSM 2151 / CCUG 4856 / JCM 11019 / LMG 10263 / NCTC 9343 / Onslow / VPI 2553 / EN-2), this protein is Ribosomal RNA small subunit methyltransferase A.